We begin with the raw amino-acid sequence, 257 residues long: MLDTILQTKREEIERLALPEQVEVKKVSLYDALRKPNRSLGLLAEVKKASPSKGLIRADFHPVEIGKSYEAAGADAISVLTDETYFQGHRDYLTKVKQAVNIPVLRKDFIIDRAQILESVRIGADAILLIVSTIPTTRLKELYDEAHELGLECLVEVHSEEEIAELFSAFTPTLIGVNNRNLKTFETDVAQTEKMAQVIPHGTMFLSESGLYTYDDLQRVKRAGATGVLVGESLMRASSPEEGIQHLFGGEPVATDA.

This sequence belongs to the TrpC family.

It carries out the reaction 1-(2-carboxyphenylamino)-1-deoxy-D-ribulose 5-phosphate + H(+) = (1S,2R)-1-C-(indol-3-yl)glycerol 3-phosphate + CO2 + H2O. The protein operates within amino-acid biosynthesis; L-tryptophan biosynthesis; L-tryptophan from chorismate: step 4/5. In Halalkalibacterium halodurans (strain ATCC BAA-125 / DSM 18197 / FERM 7344 / JCM 9153 / C-125) (Bacillus halodurans), this protein is Indole-3-glycerol phosphate synthase.